The chain runs to 601 residues: Glutamine--fructose-6-phosphate aminotransferase [isomerizing] (601 aa).

Cys-2 (nucleophile; for GATase activity) is an active-site residue. Positions 2–218 constitute a Glutamine amidotransferase type-2 domain; it reads CGIVGYIGYD…DHEIVIVKKD (217 aa). SIS domains follow at residues 284–423 and 453–591; these read IIND…EHGR and IATD…VDKP. Catalysis depends on Lys-596, which acts as the For Fru-6P isomerization activity.

In terms of assembly, homodimer.

The protein resides in the cytoplasm. The enzyme catalyses D-fructose 6-phosphate + L-glutamine = D-glucosamine 6-phosphate + L-glutamate. In terms of biological role, catalyzes the first step in hexosamine metabolism, converting fructose-6P into glucosamine-6P using glutamine as a nitrogen source. This chain is Glutamine--fructose-6-phosphate aminotransferase [isomerizing], found in Staphylococcus aureus (strain Mu50 / ATCC 700699).